The primary structure comprises 354 residues: Carbamoyl phosphate synthase arginine-specific small chain (354 aa).

A CPSase region spans residues 1–163 (MKAYLHVASG…RTIETYGEGG (163 aa)). L-glutamine contacts are provided by Ser46, Gly213, and Gly215. Residues 165 to 352 (HLVLVDFGYK…LQTVFKGENV (188 aa)) form the Glutamine amidotransferase type-1 domain. The Nucleophile role is filled by Cys240. L-glutamine-binding residues include Leu241, Gln244, Asn282, and Tyr285. Catalysis depends on residues His325 and Glu327.

It belongs to the CarA family. Composed of two chains; the small (or glutamine) chain promotes the hydrolysis of glutamine to ammonia, which is used by the large (or ammonia) chain to synthesize carbamoyl phosphate. Tetramer of heterodimers (alpha,beta)4.

It carries out the reaction hydrogencarbonate + L-glutamine + 2 ATP + H2O = carbamoyl phosphate + L-glutamate + 2 ADP + phosphate + 2 H(+). The catalysed reaction is L-glutamine + H2O = L-glutamate + NH4(+). It functions in the pathway amino-acid biosynthesis; L-arginine biosynthesis; carbamoyl phosphate from bicarbonate: step 1/1. Its function is as follows. Small subunit of the glutamine-dependent carbamoyl phosphate synthetase (CPSase). CPSase catalyzes the formation of carbamoyl phosphate from the ammonia moiety of glutamine, carbonate, and phosphate donated by ATP, constituting the first step of the biosynthetic pathway leading to arginine and/or urea. The small subunit (glutamine amidotransferase) binds and cleaves glutamine to supply the large subunit with the substrate ammonia. The chain is Carbamoyl phosphate synthase arginine-specific small chain from Geobacillus stearothermophilus (Bacillus stearothermophilus).